An 841-amino-acid polypeptide reads, in one-letter code: Axin-1 (841 aa).

The interval 1 to 78 is disordered; it reads MNIQGKGFPL…GYEPEGSASP (78 aa). Residues 44 to 61 show a composition bias toward polar residues; the sequence is FYSSKSDAVRNETSTATP. An RGS domain is found at 88–211; sequence SLHSLLDDQD…LKSDIYLEYT (124 aa). Residues 217-269 are disordered; sequence SPKIYSDPSSGSGTGKGLPGYLPTLNEDEEWKCDQDTEPEASRDSAPSSRLTQ. Residues 248-259 are compositionally biased toward basic and acidic residues; the sequence is KCDQDTEPEASR. The tract at residues 348–433 is interaction with GSK3B; it reads LRKQHRREMQ…DADISSGPSV (86 aa). Residues 434–508 form an interaction with beta-catenin region; it reads ISHKMPSAQP…RSPESGHLGK (75 aa). Disordered stretches follow at residues 482–527, 613–635, and 727–756; these read KTPG…TTKS, NIKK…SPED, and RRLE…SGAS. Residues 727-736 are compositionally biased toward basic and acidic residues; the sequence is RRLEEEEKRA. In terms of domain architecture, DIX spans 759–841; that stretch reads CENIVVAYYF…KIIGKVEKID (83 aa).

Homodimer. ADP-ribosylated by tankyrase TNKS and TNKS2. Poly-ADP-ribosylated protein is recognized by RNF146, followed by ubiquitination at 'Lys-48' and subsequent activation of the Wnt signaling pathway. In terms of processing, ubiquitinated by RNF146 when poly-ADP-ribosylated, leading to its degradation and subsequent activation of the Wnt signaling pathway.

The protein resides in the cytoplasm. It is found in the nucleus. Its subcellular location is the membrane. It localises to the cell membrane. Functionally, component of the beta-catenin destruction complex required for regulating CTNNB1 levels through phosphorylation and ubiquitination, and modulating Wnt-signaling. Controls dorsoventral patterning via two opposing effects; down-regulates CTNNB1 to inhibit the Wnt signaling pathway and ventralize embryos, but also dorsalizes embryos by activating a Wnt-independent JNK signaling pathway. This is Axin-1 (AXIN1) from Gallus gallus (Chicken).